We begin with the raw amino-acid sequence, 314 residues long: Cytochrome f (314 aa).

An N-terminal signal peptide occupies residues 1–30 (MATNKFFKSLLFALTIAINSFGFCIQDAVA). Residues Y31, C51, C54, and H55 each contribute to the heme site. A helical membrane pass occupies residues 280 to 300 (IYGYLAFCFSVLITQIMLVLK).

The protein belongs to the cytochrome f family. As to quaternary structure, the 4 large subunits of the cytochrome b6-f complex are cytochrome b6, subunit IV (17 kDa polypeptide, petD), cytochrome f and the Rieske protein, while the 4 small subunits are PetG, PetL, PetM and PetN. The complex functions as a dimer. Heme is required as a cofactor.

It is found in the plastid. Its subcellular location is the chloroplast thylakoid membrane. Functionally, component of the cytochrome b6-f complex, which mediates electron transfer between photosystem II (PSII) and photosystem I (PSI), cyclic electron flow around PSI, and state transitions. The polypeptide is Cytochrome f (Phaeodactylum tricornutum (strain CCAP 1055/1)).